A 295-amino-acid chain; its full sequence is MELLRTVDAMQAQADAARAEGQTLALVPTLGALHEGHLALVRRALNEADHVTVSVFVNPTQFGPGEDYDDYPRDLEGDRETLEALDVDAMFAPSVEEMYPYADDEALPGPLAWVDVERLDEHLCGAYREGHFRGVTTVVTKLFHACKPDVAVFGRKDAQQYVILQRLVEDLLFDIEIVGVPTVREPDGLAQSSRNEYLDPEEREQATVLYAAVTAAEEAIEGGEQAAEGVVGAMENELAAAPDADVQYAEVVDAHTLQPVDHLVPGQEVLAAVAVFFGETRLIDNTFVQVPPAQA.

The Proton donor role is filled by histidine 37. Glutamine 61 lines the (R)-pantoate pocket. Glutamine 61 contacts beta-alanine. 154–157 (GRKD) contacts ATP. Glutamine 160 serves as a coordination point for (R)-pantoate. ATP is bound by residues valine 183 and 191-194 (QSSR).

Belongs to the pantothenate synthetase family. As to quaternary structure, homodimer.

It is found in the cytoplasm. The enzyme catalyses (R)-pantoate + beta-alanine + ATP = (R)-pantothenate + AMP + diphosphate + H(+). It participates in cofactor biosynthesis; (R)-pantothenate biosynthesis; (R)-pantothenate from (R)-pantoate and beta-alanine: step 1/1. In terms of biological role, catalyzes the condensation of pantoate with beta-alanine in an ATP-dependent reaction via a pantoyl-adenylate intermediate. In Salinibacter ruber (strain DSM 13855 / M31), this protein is Pantothenate synthetase.